Here is a 489-residue protein sequence, read N- to C-terminus: Blue-light-activated histidine kinase (489 aa).

Residues 19 to 93 (ATDPFRAAVE…AIKSAIAAEK (75 aa)) form the PAS domain. Cysteine 69 is modified (S-4a-FMN cysteine). PAC domains lie at 93 to 147 (KPID…ELEK) and 232 to 281 (YSIE…NKAL). The tract at residues 259 to 341 (NPLVLGIVQD…LLKENWAGAT (83 aa)) is HWE histidine kinase domain. At histidine 288 the chain carries Phosphohistidine; by autocatalysis.

In terms of processing, FMN binds covalently to cysteine after exposure to blue light and this bond is spontaneously broken in the dark.

The enzyme catalyses ATP + protein L-histidine = ADP + protein N-phospho-L-histidine.. Functionally, photosensitive kinase that is involved in increased bacterial virulence upon exposure to light. Once ejected from an infected animal host, sunlight acts as an environmental signal that increases the virulence of the bacterium, preparing it for infection of the next host. This photoreceptor protein is directly related to the bacterium's survival and replication within host macrophages. This Brucella ovis (strain ATCC 25840 / 63/290 / NCTC 10512) protein is Blue-light-activated histidine kinase.